The sequence spans 214 residues: tRNA (guanine-N(7)-)-methyltransferase (214 aa).

S-adenosyl-L-methionine contacts are provided by Glu-43, Glu-68, Asp-95, and Asp-117. Asp-117 is a catalytic residue. Substrate contacts are provided by residues Lys-121, Asp-153, and 190–193 (TEYE).

This sequence belongs to the class I-like SAM-binding methyltransferase superfamily. TrmB family.

The enzyme catalyses guanosine(46) in tRNA + S-adenosyl-L-methionine = N(7)-methylguanosine(46) in tRNA + S-adenosyl-L-homocysteine. Its pathway is tRNA modification; N(7)-methylguanine-tRNA biosynthesis. Catalyzes the formation of N(7)-methylguanine at position 46 (m7G46) in tRNA. The sequence is that of tRNA (guanine-N(7)-)-methyltransferase from Staphylococcus haemolyticus (strain JCSC1435).